The chain runs to 100 residues: Urease subunit gamma (100 aa).

Belongs to the urease gamma subunit family. As to quaternary structure, heterotrimer of UreA (gamma), UreB (beta) and UreC (alpha) subunits. Three heterotrimers associate to form the active enzyme.

Its subcellular location is the cytoplasm. The catalysed reaction is urea + 2 H2O + H(+) = hydrogencarbonate + 2 NH4(+). It functions in the pathway nitrogen metabolism; urea degradation; CO(2) and NH(3) from urea (urease route): step 1/1. This chain is Urease subunit gamma, found in Staphylococcus xylosus.